Consider the following 208-residue polypeptide: Thiamine-phosphate synthase (208 aa).

Residues 38-42 (QYRSK) and Asn-70 contribute to the 4-amino-2-methyl-5-(diphosphooxymethyl)pyrimidine site. Positions 71 and 90 each coordinate Mg(2+). Thr-109 serves as a coordination point for 4-amino-2-methyl-5-(diphosphooxymethyl)pyrimidine. 136-138 (SAT) is a 2-[(2R,5Z)-2-carboxy-4-methylthiazol-5(2H)-ylidene]ethyl phosphate binding site. Lys-139 is a binding site for 4-amino-2-methyl-5-(diphosphooxymethyl)pyrimidine. 2-[(2R,5Z)-2-carboxy-4-methylthiazol-5(2H)-ylidene]ethyl phosphate contacts are provided by residues Gly-166 and 186–187 (VS).

This sequence belongs to the thiamine-phosphate synthase family. Requires Mg(2+) as cofactor.

It carries out the reaction 2-[(2R,5Z)-2-carboxy-4-methylthiazol-5(2H)-ylidene]ethyl phosphate + 4-amino-2-methyl-5-(diphosphooxymethyl)pyrimidine + 2 H(+) = thiamine phosphate + CO2 + diphosphate. The catalysed reaction is 2-(2-carboxy-4-methylthiazol-5-yl)ethyl phosphate + 4-amino-2-methyl-5-(diphosphooxymethyl)pyrimidine + 2 H(+) = thiamine phosphate + CO2 + diphosphate. It catalyses the reaction 4-methyl-5-(2-phosphooxyethyl)-thiazole + 4-amino-2-methyl-5-(diphosphooxymethyl)pyrimidine + H(+) = thiamine phosphate + diphosphate. It participates in cofactor biosynthesis; thiamine diphosphate biosynthesis; thiamine phosphate from 4-amino-2-methyl-5-diphosphomethylpyrimidine and 4-methyl-5-(2-phosphoethyl)-thiazole: step 1/1. Its function is as follows. Condenses 4-methyl-5-(beta-hydroxyethyl)thiazole monophosphate (THZ-P) and 2-methyl-4-amino-5-hydroxymethyl pyrimidine pyrophosphate (HMP-PP) to form thiamine monophosphate (TMP). In Aromatoleum aromaticum (strain DSM 19018 / LMG 30748 / EbN1) (Azoarcus sp. (strain EbN1)), this protein is Thiamine-phosphate synthase.